The primary structure comprises 332 residues: Fructose-1,6-bisphosphatase class 1 (332 aa).

Mg(2+)-binding residues include Glu-93, Asp-113, Leu-115, and Asp-116. Residues 116-119, Asn-209, Tyr-235, and Lys-272 contribute to the substrate site; that span reads DGSS. Glu-278 contacts Mg(2+).

Belongs to the FBPase class 1 family. As to quaternary structure, homotetramer. Requires Mg(2+) as cofactor.

It localises to the cytoplasm. The enzyme catalyses beta-D-fructose 1,6-bisphosphate + H2O = beta-D-fructose 6-phosphate + phosphate. The protein operates within carbohydrate biosynthesis; gluconeogenesis. The polypeptide is Fructose-1,6-bisphosphatase class 1 (Syntrophus aciditrophicus (strain SB)).